Consider the following 247-residue polypeptide: ATP synthase subunit a, chloroplastic (247 aa).

Helical transmembrane passes span 38–58 (QVLI…FIAV), 95–115 (VPFI…GALL), 134–154 (INTT…AGLS), 199–219 (LVVV…VMFL), and 220–240 (GLFT…AYIG).

It belongs to the ATPase A chain family. F-type ATPases have 2 components, CF(1) - the catalytic core - and CF(0) - the membrane proton channel. CF(1) has five subunits: alpha(3), beta(3), gamma(1), delta(1), epsilon(1). CF(0) has four main subunits: a, b, b' and c.

It is found in the plastid. The protein localises to the chloroplast thylakoid membrane. Functionally, key component of the proton channel; it plays a direct role in the translocation of protons across the membrane. This is ATP synthase subunit a, chloroplastic from Citrus sinensis (Sweet orange).